Here is an 813-residue protein sequence, read N- to C-terminus: Origin of replication complex subunit 1B (813 aa).

The tract at residues 1-109 (MASTPRAKTF…TPKKKKKIDS (109 aa)) is disordered. Over residues 11-21 (KSPTKTPSNIY) the composition is skewed to polar residues. Over residues 27–41 (SPSSTSHTPQTPETH) the composition is skewed to low complexity. Positions 43–52 (PLRRSARHVS) are enriched in basic residues. The Nuclear localization signal signature appears at 83 to 90 (PRKPTTDV). The interval 163–187 (DPEIEDCQICFKSDTNIMIECDDCL) is histone H3 binding. The PHD-type zinc finger occupies 166–215 (IEDCQICFKSDTNIMIECDDCLGGFHLKCLKPPLKEVPEGDWICQFCEVK). Zn(2+) contacts are provided by cysteine 169, cysteine 172, cysteine 183, cysteine 186, histidine 191, and cysteine 194. The segment at 203–207 (PEGDW) is histone H3 binding. 2 residues coordinate Zn(2+): cysteine 209 and cysteine 212. In terms of domain architecture, BAH spans 226-344 (PKPPEGKKLA…VHWRSFKRLA (119 aa)). Residues 319-324 (ASNDGD) are histone H3 binding. Residues 349-372 (GDSDSDQEWNGRKEEEVDDSDEEM) form a disordered region. Residues 436–803 (PKSLPCRSKE…DDVAFALKDN (368 aa)) form a necessary and sufficient for ORC complex assembly region. 471–479 (GVPGTGKTI) contributes to the ATP binding site. Residues aspartate 561 and glutamate 562 each contribute to the Mg(2+) site. Glutamate 562, asparagine 595, and arginine 660 together coordinate ATP.

The protein belongs to the ORC1 family. As to quaternary structure, component of the origin recognition complex (ORC) composed of at least ORC1 (ORC1A or ORC1B), ORC2, ORC3, ORC4, ORC5 and ORC6. ORC is regulated in a cell-cycle and development dependent manner. It is sequentially assembled at the exit from anaphase of mitosis and disassembled as cells enter S phase. Interacts directly with ORC2 and ORC5. Binds mostly unmodified histone H3, and, with lower efficiency, H3K4me1 H3K4me2 and H3K4me3. As to expression, follow a cell-cycle regulation with a peak at the G1/S-phase. Mostly expressed in flower buds, and, to a lower exent, in roots, leaves and stems.

It localises to the nucleus. Its function is as follows. Essential protein required for ovules fertilization. Component of the origin recognition complex (ORC) that binds origins of replication. It has a role in both chromosomal replication and mating type transcriptional silencing. Binds to the ARS consensus sequence (ACS) of origins of replication. H3K4me3 effector that positively regulates the transcription of a subset of genes. This chain is Origin of replication complex subunit 1B, found in Arabidopsis thaliana (Mouse-ear cress).